We begin with the raw amino-acid sequence, 23 residues long: Aurein-4.4 (23 aa).

The protein belongs to the frog skin active peptide (FSAP) family. Aurein subfamily. In terms of tissue distribution, expressed by the skin dorsal glands.

It is found in the secreted. Functionally, has no antimicrobial or anticancer activity. The chain is Aurein-4.4 from Ranoidea aurea (Green and golden bell frog).